The chain runs to 363 residues: Isopentenyl-diphosphate delta-isomerase (363 aa).

Position 15-16 (Arg-15–Lys-16) interacts with substrate. FMN-binding positions include Ser-73, Ser-74 to Thr-76, Ser-104, and Asn-133. Ser-104–Arg-106 is a binding site for substrate. Position 168 (Gln-168) interacts with substrate. Glu-169 lines the Mg(2+) pocket. FMN contacts are provided by residues Lys-200, Thr-230, and Ala-313–Gly-314.

Belongs to the IPP isomerase type 2 family. As to quaternary structure, homooctamer. Dimer of tetramers. FMN serves as cofactor. Requires NADPH as cofactor. The cofactor is Mg(2+).

The protein localises to the cytoplasm. It carries out the reaction isopentenyl diphosphate = dimethylallyl diphosphate. Its function is as follows. Involved in the biosynthesis of isoprenoids. Catalyzes the 1,3-allylic rearrangement of the homoallylic substrate isopentenyl (IPP) to its allylic isomer, dimethylallyl diphosphate (DMAPP). The sequence is that of Isopentenyl-diphosphate delta-isomerase from Chlorobium phaeobacteroides (strain DSM 266 / SMG 266 / 2430).